Reading from the N-terminus, the 696-residue chain is Zinc finger SWIM domain-containing protein 3 (696 aa).

The segment at 531–572 adopts an SWIM-type zinc-finger fold; the sequence is VDVQLLEDSHQVSKDGCSCSCSFQQWYHLPCRHILALLHTSQ.

In Homo sapiens (Human), this protein is Zinc finger SWIM domain-containing protein 3 (ZSWIM3).